The sequence spans 184 residues: NADH-quinone oxidoreductase subunit B 1 (184 aa).

4 residues coordinate [4Fe-4S] cluster: Cys-37, Cys-38, Cys-103, and Cys-132.

It belongs to the complex I 20 kDa subunit family. NDH-1 is composed of 14 different subunits. Subunits NuoB, C, D, E, F, and G constitute the peripheral sector of the complex. The cofactor is [4Fe-4S] cluster.

It localises to the cell membrane. It carries out the reaction a quinone + NADH + 5 H(+)(in) = a quinol + NAD(+) + 4 H(+)(out). NDH-1 shuttles electrons from NADH, via FMN and iron-sulfur (Fe-S) centers, to quinones in the respiratory chain. The immediate electron acceptor for the enzyme in this species is believed to be a menaquinone. Couples the redox reaction to proton translocation (for every two electrons transferred, four hydrogen ions are translocated across the cytoplasmic membrane), and thus conserves the redox energy in a proton gradient. This Streptomyces coelicolor (strain ATCC BAA-471 / A3(2) / M145) protein is NADH-quinone oxidoreductase subunit B 1.